The following is a 261-amino-acid chain: Matrix metalloproteinase-26 (261 aa).

Residues 1–17 (MQLVILRVTIFLPWCFA) form the signal peptide. Positions 18–89 (VPVPPAADHK…PHCGVPDGSD (72 aa)) are excised as a propeptide. N-linked (GlcNAc...) asparagine glycosylation is present at Asn64. The Cysteine switch signature appears at 80–87 (PHCGVPDG). Zn(2+) contacts are provided by Cys82 and His208. Residue Glu209 is part of the active site. Zn(2+)-binding residues include His212 and His218. Asn221 carries an N-linked (GlcNAc...) asparagine glycan.

This sequence belongs to the peptidase M10A family. Zn(2+) is required as a cofactor. The cofactor is Ca(2+). Expressed specifically in uterus and placenta. Is also widely expressed in malignant tumors from different sources as well as in diverse tumor cell lines.

Its subcellular location is the secreted. The protein resides in the extracellular space. It localises to the extracellular matrix. Functionally, may hydrolyze collagen type IV, fibronectin, fibrinogen, beta-casein, type I gelatin and alpha-1 proteinase inhibitor. Is also able to activate progelatinase B. The protein is Matrix metalloproteinase-26 (MMP26) of Homo sapiens (Human).